We begin with the raw amino-acid sequence, 257 residues long: 5'-nucleotidase SurE (257 aa).

Residues Asp-8, Asp-9, Ser-40, and Asn-93 each contribute to the a divalent metal cation site.

It belongs to the SurE nucleotidase family. A divalent metal cation serves as cofactor.

Its subcellular location is the cytoplasm. The catalysed reaction is a ribonucleoside 5'-phosphate + H2O = a ribonucleoside + phosphate. Nucleotidase that shows phosphatase activity on nucleoside 5'-monophosphates. This is 5'-nucleotidase SurE from Phenylobacterium zucineum (strain HLK1).